A 99-amino-acid polypeptide reads, in one-letter code: uncharacterized protein (99 aa).

The first 17 residues, 1–17 (MMMNAFFPAMALIVLVG), serve as a signal peptide directing secretion. Cysteine 18 carries N-palmitoyl cysteine lipidation. Cysteine 18 carries S-diacylglycerol cysteine lipidation.

It localises to the cell membrane. This is an uncharacterized protein from Escherichia coli O6:H1 (strain CFT073 / ATCC 700928 / UPEC).